Reading from the N-terminus, the 328-residue chain is Malate dehydrogenase (328 aa).

12 to 18 (GAAGQIA) is a binding site for NAD(+). Positions 93 and 99 each coordinate substrate. NAD(+) is bound by residues Asn-106, Gln-113, and 130 to 132 (VGN). Asn-132 and Arg-163 together coordinate substrate. His-188 acts as the Proton acceptor in catalysis.

It belongs to the LDH/MDH superfamily. MDH type 2 family.

It carries out the reaction (S)-malate + NAD(+) = oxaloacetate + NADH + H(+). In terms of biological role, catalyzes the reversible oxidation of malate to oxaloacetate. The chain is Malate dehydrogenase from Burkholderia multivorans (strain ATCC 17616 / 249).